The following is a 478-amino-acid chain: Adenosylhomocysteinase (478 aa).

Substrate is bound by residues Thr-57, Asp-139, and Glu-201. 202 to 204 (TTT) lines the NAD(+) pocket. Residues Lys-231 and Asp-235 each contribute to the substrate site. Residues Asn-236, 265-270 (GYGDVG), Glu-288, Asn-323, 344-346 (IGH), and Asn-392 each bind NAD(+).

It belongs to the adenosylhomocysteinase family. NAD(+) serves as cofactor.

The protein resides in the cytoplasm. The catalysed reaction is S-adenosyl-L-homocysteine + H2O = L-homocysteine + adenosine. It functions in the pathway amino-acid biosynthesis; L-homocysteine biosynthesis; L-homocysteine from S-adenosyl-L-homocysteine: step 1/1. In terms of biological role, may play a key role in the regulation of the intracellular concentration of adenosylhomocysteine. The chain is Adenosylhomocysteinase from Corynebacterium efficiens (strain DSM 44549 / YS-314 / AJ 12310 / JCM 11189 / NBRC 100395).